The following is a 78-amino-acid chain: Probable [Fe-S]-dependent transcriptional repressor (78 aa).

Residues Cys-56, Cys-61, Cys-64, and Cys-70 each contribute to the iron-sulfur cluster site.

Belongs to the FeoC family.

May function as a transcriptional regulator that controls feoABC expression. In Escherichia coli O17:K52:H18 (strain UMN026 / ExPEC), this protein is Probable [Fe-S]-dependent transcriptional repressor.